Here is a 117-residue protein sequence, read N- to C-terminus: Class I hydrophobin 2 (117 aa).

Positions 1–21 (EIVSLSLSLLAVVPLVVLVIA) are cleaved as a signal peptide. 4 disulfides stabilise this stretch: Cys35-Cys96, Cys42-Cys90, Cys43-Cys76, and Cys97-Cys110.

Belongs to the fungal hydrophobin family. Self-assembles to form functional amyloid fibrils called rodlets. Self-assembly into fibrillar rodlets occurs spontaneously at hydrophobic:hydrophilic interfaces and the rodlets further associate laterally to form amphipathic monolayers.

The protein localises to the secreted. It localises to the cell wall. In terms of biological role, aerial growth, conidiation, and dispersal of filamentous fungi in the environment rely upon a capability of their secreting small amphipathic proteins called hydrophobins (HPBs) with low sequence identity. Class I can self-assemble into an outermost layer of rodlet bundles on aerial cell surfaces, conferring cellular hydrophobicity that supports fungal growth, development and dispersal; whereas Class II form highly ordered films at water-air interfaces through intermolecular interactions but contribute nothing to the rodlet structure. This Pisolithus tinctorius (Dead man's foot) protein is Class I hydrophobin 2.